The sequence spans 251 residues: Cell division protein ZapD (251 aa).

It belongs to the ZapD family. As to quaternary structure, interacts with FtsZ.

It localises to the cytoplasm. In terms of biological role, cell division factor that enhances FtsZ-ring assembly. Directly interacts with FtsZ and promotes bundling of FtsZ protofilaments, with a reduction in FtsZ GTPase activity. The protein is Cell division protein ZapD of Paraburkholderia phymatum (strain DSM 17167 / CIP 108236 / LMG 21445 / STM815) (Burkholderia phymatum).